The following is a 543-amino-acid chain: Cytochrome P450 1B1 (543 aa).

Cys470 provides a ligand contact to heme.

The protein belongs to the cytochrome P450 family. Heme is required as a cofactor. In terms of tissue distribution, expressed in heart, brain, lung, skeletal muscle, kidney, spleen, thymus, prostate, testis, ovary, small intestine, colon, and peripheral blood leukocytes. Expressed in retinal endothelial cells and umbilical vein endothelial cells (at protein level).

The protein resides in the endoplasmic reticulum membrane. Its subcellular location is the microsome membrane. It is found in the mitochondrion. The catalysed reaction is an organic molecule + reduced [NADPH--hemoprotein reductase] + O2 = an alcohol + oxidized [NADPH--hemoprotein reductase] + H2O + H(+). The enzyme catalyses 17beta-estradiol + reduced [NADPH--hemoprotein reductase] + O2 = 2-hydroxy-17beta-estradiol + oxidized [NADPH--hemoprotein reductase] + H2O + H(+). It catalyses the reaction 17beta-estradiol + reduced [NADPH--hemoprotein reductase] + O2 = 4-hydroxy-17beta-estradiol + oxidized [NADPH--hemoprotein reductase] + H2O + H(+). It carries out the reaction estrone + reduced [NADPH--hemoprotein reductase] + O2 = 2-hydroxyestrone + oxidized [NADPH--hemoprotein reductase] + H2O + H(+). The catalysed reaction is estrone + reduced [NADPH--hemoprotein reductase] + O2 = 4-hydroxyestrone + oxidized [NADPH--hemoprotein reductase] + H2O + H(+). The enzyme catalyses testosterone + reduced [NADPH--hemoprotein reductase] + O2 = 6beta,17beta-dihydroxyandrost-4-en-3-one + oxidized [NADPH--hemoprotein reductase] + H2O + H(+). It catalyses the reaction progesterone + reduced [NADPH--hemoprotein reductase] + O2 = 6beta-hydroxyprogesterone + oxidized [NADPH--hemoprotein reductase] + H2O + H(+). It carries out the reaction progesterone + reduced [NADPH--hemoprotein reductase] + O2 = 16alpha-hydroxyprogesterone + oxidized [NADPH--hemoprotein reductase] + H2O + H(+). The catalysed reaction is all-trans-retinol + reduced [NADPH--hemoprotein reductase] + O2 = all-trans-retinal + oxidized [NADPH--hemoprotein reductase] + 2 H2O + H(+). The enzyme catalyses all-trans-retinal + reduced [NADPH--hemoprotein reductase] + O2 = all-trans-retinoate + oxidized [NADPH--hemoprotein reductase] + H2O + 2 H(+). It catalyses the reaction (5Z,8Z,11Z,14Z)-eicosatetraenoate + reduced [NADPH--hemoprotein reductase] + O2 = (8R,9S)-epoxy-(5Z,11Z,14Z)-eicosatrienoate + oxidized [NADPH--hemoprotein reductase] + H2O + H(+). It carries out the reaction (5Z,8Z,11Z,14Z)-eicosatetraenoate + reduced [NADPH--hemoprotein reductase] + O2 = (11R,12S)-epoxy-(5Z,8Z,14Z)-eicosatrienoate + oxidized [NADPH--hemoprotein reductase] + H2O + H(+). The catalysed reaction is (5Z,8Z,11Z,14Z)-eicosatetraenoate + reduced [NADPH--hemoprotein reductase] + O2 = (11S,12R)-epoxy-(5Z,8Z,14Z)-eicosatrienoate + oxidized [NADPH--hemoprotein reductase] + H2O + H(+). The enzyme catalyses (5Z,8Z,11Z,14Z)-eicosatetraenoate + reduced [NADPH--hemoprotein reductase] + O2 = (14R,15S)-epoxy-(5Z,8Z,11Z)-eicosatrienoate + oxidized [NADPH--hemoprotein reductase] + H2O + H(+). It catalyses the reaction (5S)-hydroperoxy-(6E,8Z,11Z,14Z)-eicosatetraenoate = 5-oxo-(6E,8Z,11Z,14Z)-eicosatetraenoate + H2O. It carries out the reaction (12S)-hydroperoxy-(5Z,8Z,10E,14Z)-eicosatetraenoate = 12-oxo-(5Z,8Z,10E,14Z)-eicosatetraenoate + H2O. The catalysed reaction is (13S)-hydroperoxy-(9Z,11E)-octadecadienoate = 13-oxo-(9Z,11E)-octadecadienoate + H2O. The enzyme catalyses (15S)-hydroperoxy-(5Z,8Z,11Z,13E)-eicosatetraenoate = 15-oxo-(5Z,8Z,11Z,13E)-eicosatetraenoate + H2O. The protein operates within steroid hormone biosynthesis. Its pathway is cofactor metabolism; retinol metabolism. It participates in lipid metabolism; arachidonate metabolism. Its activity is regulated as follows. Enzyme activity is increased by liposomes containing anionic phospholipids, phosphatidic acid and cardiolipin. Inhibited by naringenin with an IC(50) of 5 uM. Enzyme activity is increased by cytochrome b5. Its function is as follows. A cytochrome P450 monooxygenase involved in the metabolism of various endogenous substrates, including fatty acids, steroid hormones and vitamins. Mechanistically, uses molecular oxygen inserting one oxygen atom into a substrate, and reducing the second into a water molecule, with two electrons provided by NADPH via cytochrome P450 reductase (NADPH--hemoprotein reductase). Exhibits catalytic activity for the formation of hydroxyestrogens from estrone (E1) and 17beta-estradiol (E2), namely 2- and 4-hydroxy E1 and E2. Displays a predominant hydroxylase activity toward E2 at the C-4 position. Metabolizes testosterone and progesterone to B or D ring hydroxylated metabolites. May act as a major enzyme for all-trans retinoic acid biosynthesis in extrahepatic tissues. Catalyzes two successive oxidative transformation of all-trans retinol to all-trans retinal and then to the active form all-trans retinoic acid. Catalyzes the epoxidation of double bonds of certain PUFA. Converts arachidonic acid toward epoxyeicosatrienoic acid (EpETrE) regioisomers, 8,9-, 11,12-, and 14,15- EpETrE, that function as lipid mediators in the vascular system. Additionally, displays dehydratase activity toward oxygenated eicosanoids hydroperoxyeicosatetraenoates (HpETEs). This activity is independent of cytochrome P450 reductase, NADPH, and O2. Also involved in the oxidative metabolism of xenobiotics, particularly converting polycyclic aromatic hydrocarbons and heterocyclic aryl amines procarcinogens to DNA-damaging products. Plays an important role in retinal vascular development. Under hyperoxic O2 conditions, promotes retinal angiogenesis and capillary morphogenesis, likely by metabolizing the oxygenated products generated during the oxidative stress. Also, contributes to oxidative homeostasis and ultrastructural organization and function of trabecular meshwork tissue through modulation of POSTN expression. The protein is Cytochrome P450 1B1 of Homo sapiens (Human).